We begin with the raw amino-acid sequence, 1203 residues long: Probable phospholipid-transporting ATPase 11 (1203 aa).

Topologically, residues 1–71 (MTKCRRRRLH…STKYTLASFI (71 aa)) are cytoplasmic. The chain crosses the membrane as a helical span at residues 72–93 (PKSLFEQFRRVANFYFLVTGVL). Over 94–97 (SLTA) the chain is Extracellular. A helical transmembrane segment spans residues 98 to 120 (LSPYSPISALLPLTFVIAASMVK). At 121–303 (EAIEDWGRKK…SRIERKMDKI (183 aa)) the chain is on the cytoplasmic side. The helical transmembrane segment at 304-325 (IYLMFGVVFLMSFIGSIVFGIE) threads the bilayer. At 326–363 (TREDRVRNGGRTERWYLRPDNADIFFDPDRAPMAAVYH) the chain is on the extracellular side. Residues 364–381 (FFTAVMLYSYFIPISLYV) form a helical membrane-spanning segment. Residues 382–921 (SIEIVKVLQS…HGHWCYSRIS (540 aa)) are Cytoplasmic-facing. Asp429 serves as the catalytic 4-aspartylphosphate intermediate. Residues Asp866 and Asp870 each contribute to the Mg(2+) site. Residues 922–941 (SMICYFFYKNITFGVTVFLY) form a helical membrane-spanning segment. The Extracellular portion of the chain corresponds to 942 to 955 (EAYTSFSAQPAYND). A helical membrane pass occupies residues 956–975 (WFLSLFNVFFSSLPVIALGV). Topologically, residues 976–1005 (FDQDVSARYCYKFPLLYQEGVQNLLFSWKR) are cytoplasmic. The helical transmembrane segment at 1006-1028 (IIGWMFNGVFTALAIFFLCKESL) threads the bilayer. The Extracellular segment spans residues 1029–1041 (KHQLYNPNGKTAG). A helical transmembrane segment spans residues 1042-1064 (REILGGTMYTCVVWVVNLQMALA). At 1065 to 1070 (ISYFTW) the chain is on the cytoplasmic side. A helical membrane pass occupies residues 1071–1091 (LQHIVIWGSVAFWYIFLMIYG). Over 1092–1108 (AITPSFSTDAYKVFIEA) the chain is Extracellular. A helical transmembrane segment spans residues 1109-1133 (LAPAPSYWLTTLFVMFFALIPFFVF). The Cytoplasmic segment spans residues 1134 to 1203 (KSVQMRFFPG…DQLNKNFIAF (70 aa)).

Belongs to the cation transport ATPase (P-type) (TC 3.A.3) family. Type IV subfamily.

It is found in the membrane. The enzyme catalyses ATP + H2O + phospholipidSide 1 = ADP + phosphate + phospholipidSide 2.. Functionally, involved in transport of phospholipids. The protein is Probable phospholipid-transporting ATPase 11 of Arabidopsis thaliana (Mouse-ear cress).